The primary structure comprises 350 residues: Ketol-acid reductoisomerase (NADP(+)) (350 aa).

The 181-residue stretch at 3–183 folds into the KARI N-terminal Rossmann domain; the sequence is AQIWYEDDGD…GALRAGAIKT (181 aa). NADP(+) is bound by residues 26–29, Arg49, Ser52, Ser54, and 84–87; these read YGSQ and DQYQ. His109 is a catalytic residue. Gly135 is a binding site for NADP(+). Residues 184-327 enclose the KARI C-terminal knotted domain; the sequence is TFKEETETDL…PKLRAMFSWN (144 aa). Residues Asp192, Glu196, Glu228, and Glu232 each coordinate Mg(2+). Ser253 provides a ligand contact to substrate.

The protein belongs to the ketol-acid reductoisomerase family. It depends on Mg(2+) as a cofactor.

The catalysed reaction is (2R)-2,3-dihydroxy-3-methylbutanoate + NADP(+) = (2S)-2-acetolactate + NADPH + H(+). It catalyses the reaction (2R,3R)-2,3-dihydroxy-3-methylpentanoate + NADP(+) = (S)-2-ethyl-2-hydroxy-3-oxobutanoate + NADPH + H(+). It functions in the pathway amino-acid biosynthesis; L-isoleucine biosynthesis; L-isoleucine from 2-oxobutanoate: step 2/4. Its pathway is amino-acid biosynthesis; L-valine biosynthesis; L-valine from pyruvate: step 2/4. Functionally, involved in the biosynthesis of branched-chain amino acids (BCAA). Catalyzes an alkyl-migration followed by a ketol-acid reduction of (S)-2-acetolactate (S2AL) to yield (R)-2,3-dihydroxy-isovalerate. In the isomerase reaction, S2AL is rearranged via a Mg-dependent methyl migration to produce 3-hydroxy-3-methyl-2-ketobutyrate (HMKB). In the reductase reaction, this 2-ketoacid undergoes a metal-dependent reduction by NADPH to yield (R)-2,3-dihydroxy-isovalerate. This is Ketol-acid reductoisomerase (NADP(+)) from Bifidobacterium animalis subsp. lactis (strain AD011).